Consider the following 142-residue polypeptide: Large ribosomal subunit protein uL11 (142 aa).

Belongs to the universal ribosomal protein uL11 family. In terms of assembly, part of the ribosomal stalk of the 50S ribosomal subunit. Interacts with L10 and the large rRNA to form the base of the stalk. L10 forms an elongated spine to which L12 dimers bind in a sequential fashion forming a multimeric L10(L12)X complex. One or more lysine residues are methylated.

Its function is as follows. Forms part of the ribosomal stalk which helps the ribosome interact with GTP-bound translation factors. This is Large ribosomal subunit protein uL11 from Solibacter usitatus (strain Ellin6076).